Consider the following 680-residue polypeptide: Methionine--tRNA ligase (680 aa).

The 'HIGH' region motif lies at 15–25; the sequence is PYANGSIHLGH. 4 residues coordinate Zn(2+): C146, C149, C159, and C162. The 'KMSKS' region signature appears at 332–336; the sequence is KMSKS. K335 provides a ligand contact to ATP. The tRNA-binding domain occupies 579–680; sequence DFAKVDMRIA…EGAQPGMRVM (102 aa).

This sequence belongs to the class-I aminoacyl-tRNA synthetase family. MetG type 1 subfamily. As to quaternary structure, homodimer. Requires Zn(2+) as cofactor.

It localises to the cytoplasm. It carries out the reaction tRNA(Met) + L-methionine + ATP = L-methionyl-tRNA(Met) + AMP + diphosphate. Functionally, is required not only for elongation of protein synthesis but also for the initiation of all mRNA translation through initiator tRNA(fMet) aminoacylation. This Photobacterium profundum (strain SS9) protein is Methionine--tRNA ligase.